Here is a 495-residue protein sequence, read N- to C-terminus: Formin-like protein 17 (495 aa).

Residues M1 to R92 are disordered. Positions G19–L29 are enriched in pro residues. Over residues Q30–S39 the composition is skewed to low complexity. Residues K86–K486 form the FH2 domain.

The protein belongs to the formin-like family. Class-II subfamily.

The polypeptide is Formin-like protein 17 (FH17) (Arabidopsis thaliana (Mouse-ear cress)).